Consider the following 630-residue polypeptide: Biosynthetic arginine decarboxylase (630 aa).

Lys-99 is subject to N6-(pyridoxal phosphate)lysine. 281–291 provides a ligand contact to substrate; it reads VDIGGGLGVDY.

This sequence belongs to the Orn/Lys/Arg decarboxylase class-II family. SpeA subfamily. The cofactor is Mg(2+). It depends on pyridoxal 5'-phosphate as a cofactor.

The enzyme catalyses L-arginine + H(+) = agmatine + CO2. Its function is as follows. Catalyzes the biosynthesis of agmatine from arginine. The sequence is that of Biosynthetic arginine decarboxylase from Bacteroides thetaiotaomicron (strain ATCC 29148 / DSM 2079 / JCM 5827 / CCUG 10774 / NCTC 10582 / VPI-5482 / E50).